A 1072-amino-acid chain; its full sequence is DNA-directed RNA polymerase subunit beta (1072 aa).

The protein belongs to the RNA polymerase beta chain family. As to quaternary structure, in plastids the minimal PEP RNA polymerase catalytic core is composed of four subunits: alpha, beta, beta', and beta''. When a (nuclear-encoded) sigma factor is associated with the core the holoenzyme is formed, which can initiate transcription.

The protein localises to the plastid. The protein resides in the chloroplast. It catalyses the reaction RNA(n) + a ribonucleoside 5'-triphosphate = RNA(n+1) + diphosphate. Its function is as follows. DNA-dependent RNA polymerase catalyzes the transcription of DNA into RNA using the four ribonucleoside triphosphates as substrates. This chain is DNA-directed RNA polymerase subunit beta, found in Eucalyptus globulus subsp. globulus (Tasmanian blue gum).